The primary structure comprises 870 residues: Dynamin-2 (870 aa).

The Dynamin-type G domain occupies 28–294 (HLDLPQIAVV…LTNHIRESLP (267 aa)). Residues 38–45 (GGQSAGKS) are G1 motif. The GDP site is built by serine 41, glycine 43, lysine 44, serine 45, serine 46, arginine 59, and glycine 60. Residues 64–66 (VTR) form a G2 motif region. The segment at 136–139 (DLPG) is G3 motif. Residues 205–208 (TKLD) are G4 motif. The GDP site is built by lysine 206, aspartate 208, and aspartate 211. Tyrosine 231 carries the post-translational modification Phosphotyrosine. The interval 235 to 238 (VNRS) is G5 motif. Asparagine 236, arginine 237, and glutamine 239 together coordinate GDP. At lysine 299 the chain carries N6-acetyllysine. In terms of domain architecture, PH spans 519-625 (LVIRRGWLTI…WKASFLRAGV (107 aa)). Tyrosine 597 is subject to Phosphotyrosine. An N6-acetyllysine modification is found at lysine 598. Positions 653–744 (VETIRNLVDS…IIGDISTSTV (92 aa)) constitute a GED domain. The tract at residues 741-870 (TSTVSTPVPP…IRPAEPSLLD (130 aa)) is disordered. Threonine 755 carries the phosphothreonine modification. Polar residues predominate over residues 756-767 (WLQNTSSHSPTP). Phosphoserine; by CDK1 is present on serine 764. Positions 826–846 (SAPPQIPSRPARIPPGIPPGV) are enriched in pro residues. Positions 847 to 864 (PSRRAPAAPSRPTIIRPA) are enriched in low complexity.

It belongs to the TRAFAC class dynamin-like GTPase superfamily. Dynamin/Fzo/YdjA family. In terms of assembly, oligomerizes into a helical polymer that self-assembles around the vesicle membrane, when associated to the menbrane through lipid binding. Interacts with SHANK1 and SHANK2. Interacts with SNX9. Interacts (via C-terminal proline-rich domain (PRD)) with SNX18 (via SH3 domain); this interaction regulates ATG9A and ATG16L1 trafficking from recycling endosomes to sites of autophagosome formation. Interacts with SNX33 (via SH3 domain). Interacts with PSTPIP1 (via SH3 domain). Interacts with CTNND2. Interacts (via C-terminal proline-rich domain (PRD)) with BIN1 (via SH3 domain); this interaction allows the recruitment of DNM2 to the membrane tubules and inhibits self-assembly-stimulated GTPase activity on the membrane. Interacts with GABARAP, GABARAPL1 and GABARAPL2. Interacts with MAP1LC3B (the lipidate and non-lipidated LC3 form); this interaction mediates recycling endosome scission leading to autophagosome release. Interacts with ITSN1. Interacts with MYOF. May interact with PIK3C3. May be a component of a complex composed of RAB5A (in GDP-bound form), DYN2 and PIK3C3. Interacts with SDC4; this interaction is markedly enhanced at focal ahesion site upon induction of focal adhesions and stress-fiber formation. Interacts with ACTN1. Interacts with CTTN; this interaction stimulates the intrinsic GTPase activity of DNM2 and stabilizes the association of DNM2 and actin filaments; in addition this interaction is stimulated by ligand binding to the receptor, leading to the recruitment of the DNM2-CTTN complex to the sequestered receptor-ligand complex to its internalization. Interacts with NOSTRIN (via SH3 domain); this interaction allows the recruitment of NOS3 to dynamin-positive structures. Interacts (via C-terminal proline-rich domain (PRD)) with SH3BP4 (via SH3 domain); this interaction controls the GTPase activity and is prevented by EGFR-induced tyrosine phosphorylation of either DNM2 or SH3BP4. Interacts with MYO1E (via SH3 domain). Interacts with TUBG1; this interaction may participate in centrosome cohesion. In terms of processing, phosphorylation at Ser-848 by GSK3-alpha relieves the inhibition of BIN1 and promotes endocytosis. Phosphorylation at Ser-764 by CDK1 is greatly increased upon mitotic entry. It regulates cytokinesis downstream of calcineurin, and does not affect clathrin-mediated endocytosis. Dephosphorylated by calcineurin/PP2 during cytokinesis in a Ca(2+)- and calmodulin-dependent manner. Phosphorylated on tyrosine residues by EGFR. Phosphorylated on tyrosine residues after activation of SRC. In terms of tissue distribution, ubiquitously expressed. Brain expression is restricted to glial cells and fibroblasts. Highest levels in the testis.

It is found in the cytoplasm. The protein localises to the cytoskeleton. It localises to the cytoplasmic vesicle. Its subcellular location is the clathrin-coated vesicle. The protein resides in the cell projection. It is found in the uropodium. The protein localises to the endosome. It localises to the microtubule organizing center. Its subcellular location is the centrosome. The protein resides in the centriole. It is found in the recycling endosome. The protein localises to the phagocytic cup. It localises to the phagosome membrane. Its subcellular location is the podosome. The protein resides in the cell junction. It is found in the postsynaptic density. The protein localises to the synapse. It localises to the synaptosome. Its subcellular location is the midbody. The protein resides in the membrane. It is found in the clathrin-coated pit. The protein localises to the cell membrane. It carries out the reaction GTP + H2O = GDP + phosphate + H(+). In terms of biological role, catalyzes the hydrolysis of GTP and utilizes this energy to mediate vesicle scission at plasma membrane during endocytosis and filament remodeling at many actin structures during organization of the actin cytoskeleton. Plays an important role in vesicular trafficking processes, namely clathrin-mediated endocytosis (CME), exocytic and clathrin-coated vesicle from the trans-Golgi network, and PDGF stimulated macropinocytosis. During vesicular trafficking process, associates to the membrane, through lipid binding, and self-assembles into ring-like structure through oligomerization to form a helical polymer around the vesicle membrane and leading to vesicle scission. Plays a role in organization of the actin cytoskeleton by mediating arrangement of stress fibers and actin bundles in podocytes. During organization of the actin cytoskeleton, self-assembles into ring-like structure that directly bundles actin filaments to form typical membrane tubules decorated with dynamin spiral polymers. Self-assembly increases GTPase activity and the GTP hydrolysis causes the rapid depolymerization of dynamin spiral polymers, and results in dispersion of actin bundles. Remodels, through its interaction with CTTN, bundled actin filaments in a GTPase-dependent manner and plays a role in orchestrating the global actomyosin cytoskeleton. The interaction with CTTN stabilizes the interaction of DNM2 and actin filaments and stimulates the intrinsic GTPase activity that results in actin filament-barbed ends and increases the sensitivity of filaments in bundles to the actin depolymerizing factor, CFL1. Plays a role in the autophagy process, by participating in the formation of ATG9A vesicles destined for the autophagosomes through its interaction with SNX18, by mediating recycling endosome scission leading to autophagosome release through MAP1LC3B interaction and by regulating maturation of apoptotic cell corpse-containing phagosomes by recruiting PIK3C3 to the phagosome membrane. Also plays a role in cytokinesis. May participate in centrosome cohesion through its interaction with TUBG1. Plays a role in the regulation of neuron morphology, axon growth and formation of neuronal growth cones. Involved in membrane tubulation. The chain is Dynamin-2 from Rattus norvegicus (Rat).